Here is a 132-residue protein sequence, read N- to C-terminus: Small ribosomal subunit protein uS8 (132 aa).

The protein belongs to the universal ribosomal protein uS8 family. As to quaternary structure, part of the 30S ribosomal subunit. Contacts proteins S5 and S12.

Functionally, one of the primary rRNA binding proteins, it binds directly to 16S rRNA central domain where it helps coordinate assembly of the platform of the 30S subunit. The protein is Small ribosomal subunit protein uS8 of Staphylococcus saprophyticus subsp. saprophyticus (strain ATCC 15305 / DSM 20229 / NCIMB 8711 / NCTC 7292 / S-41).